Reading from the N-terminus, the 667-residue chain is WD repeat-containing protein 48 homolog (667 aa).

8 WD repeats span residues 26-65 (QHRN…NEKY), 71-110 (HHND…CMST), 113-152 (THRD…ALTA), 164-203 (GSKD…RSMK), 206-245 (GHTE…CVQT), 248-287 (VHKE…NKML), 290-329 (EEQA…RCTL), and 350-389 (KGGA…KKEQ). The interval 591 to 615 (ETTPSGGNANNSLQNSQSDANSEGS) is disordered.

Belongs to the WD repeat WDR48 family. As to quaternary structure, catalytic component of the Usp12-46 deubiquitylase complex consisting of Usp12-46, Wdr20 and Uaf1; regulatory subunit that, together wtih Wdr20, stabilizes Usp12-46. The Usp12-46 deubiquitylase complex associates with arr/arrow; the interaction leads to deubiquitination and stabilization of arr/arrow.

Functionally, regulatory component of the Usp12-46 deubiquitylase complex. activates deubiquitination by increasing the catalytic turnover without increasing the affinity of deubiquitinating enzymes for the substrate. The complex deubiquitylates the wg/wingless-signaling receptor arr/arrow, which stabilizes the receptor and increases its concentration at the cell surface; this enhances the sensitivity of cells to wg/wingless-signal stimulation. This increases the amplitude and spatial range of the signaling response to the wg/wingless morphogen gradient, facilitating the precise concentration-dependent regulation of its target genes. Together with Wdr20 and Usp12-46 required for wg/wingless-mediated signaling in the wing imaginal disc and for wg/wingless-dependent regulation of intestinal stem cell proliferation. This Drosophila ananassae (Fruit fly) protein is WD repeat-containing protein 48 homolog.